Here is a 193-residue protein sequence, read N- to C-terminus: Large ribosomal subunit protein uL5 (193 aa).

It belongs to the universal ribosomal protein uL5 family. In terms of assembly, part of the 50S ribosomal subunit; part of the 5S rRNA/L5/L18/L25 subcomplex. Contacts the 5S rRNA and the P site tRNA. Forms a bridge to the 30S subunit in the 70S ribosome.

In terms of biological role, this is one of the proteins that bind and probably mediate the attachment of the 5S RNA into the large ribosomal subunit, where it forms part of the central protuberance. In the 70S ribosome it contacts protein S13 of the 30S subunit (bridge B1b), connecting the 2 subunits; this bridge is implicated in subunit movement. Contacts the P site tRNA; the 5S rRNA and some of its associated proteins might help stabilize positioning of ribosome-bound tRNAs. The sequence is that of Large ribosomal subunit protein uL5 from Pseudarthrobacter chlorophenolicus (strain ATCC 700700 / DSM 12829 / CIP 107037 / JCM 12360 / KCTC 9906 / NCIMB 13794 / A6) (Arthrobacter chlorophenolicus).